A 287-amino-acid polypeptide reads, in one-letter code: Nucleoside kinase (287 aa).

Substrate contacts are provided by aspartate 13, asparagine 28, glycine 38, and asparagine 42. An ATP-binding site is contributed by glutamine 102. Substrate-binding residues include serine 104 and glutamine 150. ATP-binding positions include asparagine 173 and 196 to 201 (TNGERG). Position 227 (aspartate 227) interacts with substrate. The active-site Proton acceptor is the aspartate 227.

This sequence belongs to the carbohydrate kinase PfkB family. As to quaternary structure, homodimer. It depends on Mg(2+) as a cofactor. The cofactor is Co(2+).

The enzyme catalyses adenosine + ATP = AMP + ADP + H(+). The catalysed reaction is cytidine + ATP = CMP + ADP + H(+). It catalyses the reaction guanosine + ATP = GMP + ADP + H(+). It carries out the reaction inosine + ATP = IMP + ADP + H(+). Nucleoside kinase with broad substrate specificity. Catalyzes the phosphorylation of a variety of nucleosides to the corresponding nucleoside 5'-mono-phosphate in the presence of phosphate donors and divalent cations. Displays the most efficient activity with guanosine, followed by inosine, cytidine, and adenosine. Negligible enzymatic activity is detected with thymidine, uridine, and 2-deoxyadenosine. ATP is the most efficient phosphate donor, but can also use GTP and ITP. Shows no sugar kinase activity, since it is unable to phosphorylate ribose, fructose-1-phosphate, or fructose-6-phosphate. The protein is Nucleoside kinase of Thermoplasma acidophilum (strain ATCC 25905 / DSM 1728 / JCM 9062 / NBRC 15155 / AMRC-C165).